Reading from the N-terminus, the 1027-residue chain is Multidrug resistance protein MdtC (1027 aa).

12 helical membrane-spanning segments follow: residues 16–36 (LLSLAISLCGALGFMLLPVAP), 333–353 (EVERALAIAVALVILVVFLFL), 360–380 (LIPAVAVPVSLIGTFSAMYLC), 387–407 (LSLMALTVATGFVVDDAIVVL), 431–451 (VGFTVLSMSISLVAVFIPLLL), 463–483 (FAITLTTAIGISLFVSLTLTP), 528–548 (WIMAIFITTLGLNAYLYISAP), 853–873 (LILILAAIVTVYIVLGVLYES), 875–895 (IHPLTILSTLPSAGVGALLAL), 897–917 (LFDTPFSLIALIGIMLLIGIV), 953–973 (PIIMTTLAALFGALPLMLSSG), and 984–1004 (ITIVGGLLMSQLLTLYTTPII).

It belongs to the resistance-nodulation-cell division (RND) (TC 2.A.6) family. MdtC subfamily. Part of a tripartite efflux system composed of MdtA, MdtB and MdtC. MdtC forms a heteromultimer with MdtB.

It localises to the cell inner membrane. This chain is Multidrug resistance protein MdtC, found in Proteus mirabilis (strain HI4320).